Consider the following 259-residue polypeptide: Thiazole synthase (259 aa).

The active-site Schiff-base intermediate with DXP is K99. 1-deoxy-D-xylulose 5-phosphate contacts are provided by residues G161, 187-188 (AG), and 209-210 (NT).

This sequence belongs to the ThiG family. Homotetramer. Forms heterodimers with either ThiH or ThiS.

It is found in the cytoplasm. It carries out the reaction [ThiS sulfur-carrier protein]-C-terminal-Gly-aminoethanethioate + 2-iminoacetate + 1-deoxy-D-xylulose 5-phosphate = [ThiS sulfur-carrier protein]-C-terminal Gly-Gly + 2-[(2R,5Z)-2-carboxy-4-methylthiazol-5(2H)-ylidene]ethyl phosphate + 2 H2O + H(+). Its pathway is cofactor biosynthesis; thiamine diphosphate biosynthesis. In terms of biological role, catalyzes the rearrangement of 1-deoxy-D-xylulose 5-phosphate (DXP) to produce the thiazole phosphate moiety of thiamine. Sulfur is provided by the thiocarboxylate moiety of the carrier protein ThiS. In vitro, sulfur can be provided by H(2)S. The sequence is that of Thiazole synthase from Sulfurimonas denitrificans (strain ATCC 33889 / DSM 1251) (Thiomicrospira denitrificans (strain ATCC 33889 / DSM 1251)).